The following is a 68-amino-acid chain: Large ribosomal subunit protein bL31 (68 aa).

Positions 16, 18, 36, and 39 each coordinate Zn(2+).

Belongs to the bacterial ribosomal protein bL31 family. Type A subfamily. In terms of assembly, part of the 50S ribosomal subunit. Requires Zn(2+) as cofactor.

Functionally, binds the 23S rRNA. The sequence is that of Large ribosomal subunit protein bL31 from Dictyoglomus turgidum (strain DSM 6724 / Z-1310).